A 286-amino-acid polypeptide reads, in one-letter code: 1D-myo-inositol 2-acetamido-2-deoxy-alpha-D-glucopyranoside deacetylase (286 aa).

Residues His12, Asp15, and His147 each coordinate Zn(2+).

It belongs to the MshB deacetylase family. Zn(2+) serves as cofactor.

The enzyme catalyses 1D-myo-inositol 2-acetamido-2-deoxy-alpha-D-glucopyranoside + H2O = 1D-myo-inositol 2-amino-2-deoxy-alpha-D-glucopyranoside + acetate. In terms of biological role, catalyzes the deacetylation of 1D-myo-inositol 2-acetamido-2-deoxy-alpha-D-glucopyranoside (GlcNAc-Ins) in the mycothiol biosynthesis pathway. This is 1D-myo-inositol 2-acetamido-2-deoxy-alpha-D-glucopyranoside deacetylase from Thermobifida fusca (strain YX).